A 399-amino-acid polypeptide reads, in one-letter code: Lysosomal acid lipase/cholesteryl ester hydrolase (399 aa).

Positions 1–27 (MKMRFLGLVVCLVLWTLHSEGSGGKLT) are cleaved as a signal peptide. Positions 28–76 (AVDPETNMNVSEIISYWGFPSEEYLVETEDGYILCLNRIPHGRKNHSDK) are cleaved as a propeptide — removed in mature form. Asn36, Asn72, Asn101, and Asn161 each carry an N-linked (GlcNAc...) asparagine glycan. Positions 80–380 (PVVFLQHGLL…EWEHLDFIWG (301 aa)) constitute an AB hydrolase-1 domain. Ser174 acts as the Charge relay system in catalysis. 2 N-linked (GlcNAc...) asparagine glycosylation sites follow: Asn273 and Asn321. Catalysis depends on His374, which acts as the Charge relay system.

Belongs to the AB hydrolase superfamily. Lipase family. As to quaternary structure, monomer. In terms of processing, glycosylation is not essential for catalytic activity. As to expression, most abundantly expressed in brain, lung, kidney and mammary gland, a moderate expression seen in placenta and expressed at low levels in the liver and heart.

It localises to the lysosome. It carries out the reaction a sterol ester + H2O = a sterol + a fatty acid + H(+). The enzyme catalyses cholesteryl (9Z-octadecenoate) + H2O = cholesterol + (9Z)-octadecenoate + H(+). It catalyses the reaction a triacylglycerol + H2O = a 1,2-diacylglycerol + a fatty acid + H(+). The catalysed reaction is 1,2-di-(9Z-octadecenoyl)-glycerol + (9Z)-octadecenoate + H(+) = 1,2,3-tri-(9Z-octadecenoyl)-glycerol + H2O. It carries out the reaction a 1,2-diacylglycerol + H2O = a 1-acylglycerol + a fatty acid + H(+). The enzyme catalyses 1,2-di-(9Z-octadecenoyl)-glycerol + H2O = 1-(9Z-octadecenoyl)-glycerol + (9Z)-octadecenoate + H(+). It catalyses the reaction a 1,3-diacylglycerol + H2O = a 1-acylglycerol + a fatty acid + H(+). The catalysed reaction is 1,3-di-(9Z-octadecenoyl)-glycerol + H2O = 1-(9Z-octadecenoyl)-glycerol + (9Z)-octadecenoate + H(+). Catalyzes the deacylation of cholesteryl ester core lipids of endocytosed low density lipoproteins to generate free fatty acids and cholesterol. Hydrolyzes triglycerides (1,2,3-triacylglycerol) and diglycerides (such as 1,2-diacylglycerol and 1,3-diacylglycerol) with preference for the acyl moieties at the sn-1 or sn-3 positions. In Homo sapiens (Human), this protein is Lysosomal acid lipase/cholesteryl ester hydrolase (LIPA).